Reading from the N-terminus, the 179-residue chain is ATP synthase subunit delta (179 aa).

The protein belongs to the ATPase delta chain family. As to quaternary structure, F-type ATPases have 2 components, F(1) - the catalytic core - and F(0) - the membrane proton channel. F(1) has five subunits: alpha(3), beta(3), gamma(1), delta(1), epsilon(1). F(0) has three main subunits: a(1), b(2) and c(10-14). The alpha and beta chains form an alternating ring which encloses part of the gamma chain. F(1) is attached to F(0) by a central stalk formed by the gamma and epsilon chains, while a peripheral stalk is formed by the delta and b chains.

The protein resides in the cell membrane. F(1)F(0) ATP synthase produces ATP from ADP in the presence of a proton or sodium gradient. F-type ATPases consist of two structural domains, F(1) containing the extramembraneous catalytic core and F(0) containing the membrane proton channel, linked together by a central stalk and a peripheral stalk. During catalysis, ATP synthesis in the catalytic domain of F(1) is coupled via a rotary mechanism of the central stalk subunits to proton translocation. In terms of biological role, this protein is part of the stalk that links CF(0) to CF(1). It either transmits conformational changes from CF(0) to CF(1) or is implicated in proton conduction. The chain is ATP synthase subunit delta from Bacillus sp. (strain PS3).